Reading from the N-terminus, the 426-residue chain is Histidine--tRNA ligase (426 aa).

Belongs to the class-II aminoacyl-tRNA synthetase family. In terms of assembly, homodimer.

It is found in the cytoplasm. The enzyme catalyses tRNA(His) + L-histidine + ATP = L-histidyl-tRNA(His) + AMP + diphosphate + H(+). The sequence is that of Histidine--tRNA ligase from Streptococcus pyogenes serotype M6 (strain ATCC BAA-946 / MGAS10394).